The sequence spans 377 residues: Deoxyribonuclease CdiA-o11 (377 aa).

The VENN CT cleavage motif signature appears at 81–84 (VENN). Positions 85–233 (YLSTNQSLTF…ISFMSRNTAT (149 aa)) are inner membrane translocation domain (IMTD), targets to YciB. The interval 88 to 377 (TNQSLTFDKE…GVKVTVTQVK (290 aa)) is CT domain, sufficient to interact with CdiI. Residues 222–377 (AAISFMSRNT…GVKVTVTQVK (156 aa)) are has DNase activity in vivo, cannot be expressed in the absence of CdiI. Active-site residues include Glu-257, Asp-278, Ser-289, and Lys-291. Zn(2+)-binding residues include Glu-257 and Asp-278.

Interacts with cognate immunity protein CdiI-o11-EC869, which blocks its toxic DNase activity. Requires Zn(2+) as cofactor.

The protein resides in the target cell. It is found in the target cell cytoplasm. Functionally, toxic component of a toxin-immunity protein module, which functions as a cellular contact-dependent growth inhibition (CDI) system. CDI modules allow bacteria to communicate with and inhibit the growth of closely related neighboring bacteria in a contact-dependent fashion. The C-terminal 289 residues (the CT fragment) has a strong DNase activity in the presence of Zn(2+), completely degrading supercoiled and linear plasmids, and inhibits growth. In the presence of Mg(2+) it nicks dsDNA. Toxic activity is neutralized by coexpression of the cognate immunity protein CdiI-o11-EC869, but not by non-cognate immunity proteins from other toxin-immunity modules or other strains of E.coli. Gains access to the cytoplasm of target cells by using integral inner membrane protein YciB. In terms of biological role, expression of this locus confers protection against other bacteria carrying the locus. The sequence is that of Deoxyribonuclease CdiA-o11 (cdiA4) from Escherichia coli O157:H7 (strain EC869).